Consider the following 655-residue polypeptide: uncharacterized protein (655 aa).

The N-terminal stretch at 1-23 (MKRTIKYLSFLGLIPFLSITTIS) is a signal peptide. The N-palmitoyl cysteine moiety is linked to residue cysteine 24. Residue cysteine 24 is the site of S-diacylglycerol cysteine attachment.

Belongs to the MG067/MG068/MG395 family.

It localises to the cell membrane. This is an uncharacterized protein from Mycoplasma capricolum subsp. capricolum (strain California kid / ATCC 27343 / NCTC 10154).